Reading from the N-terminus, the 393-residue chain is Beta-1,4-galactosyltransferase 3 (393 aa).

At 1-10 (MLRRLLERPC) the chain is on the cytoplasmic side. Residues 11–31 (TLALLVGSQLAVMMYLSLGGF) traverse the membrane as a helical; Signal-anchor for type II membrane protein segment. The Lumenal segment spans residues 32-393 (RSLSALFGRD…ANHTALRGSH (362 aa)). Asn-57 is a glycosylation site (N-linked (GlcNAc...) asparagine). Cys-77 and Cys-119 are disulfide-bonded. 130-134 (PHRAR) contributes to the UDP-alpha-D-galactose binding site. Asn-166 carries an N-linked (GlcNAc...) asparagine glycan. UDP-alpha-D-galactose is bound by residues 169 to 171 (FNR), 196 to 197 (VD), Tyr-226, and Trp-258. A disulfide bridge connects residues Cys-190 and Cys-209. Residue Asp-197 participates in Mn(2+) binding. 260-263 (GEDD) serves as a coordination point for N-acetyl-D-glucosamine. His-291 provides a ligand contact to Mn(2+). 291-293 (HRG) contributes to the UDP-alpha-D-galactose binding site. N-acetyl-D-glucosamine is bound at residue Arg-303. Residues Asn-337 and Asn-385 are each glycosylated (N-linked (GlcNAc...) asparagine). The segment at 339–393 (TADIGTDPRGPRAPSGPRYPPGSSQAFRQEMLQRRPPARPGPLSTANHTALRGSH) is disordered.

The protein belongs to the glycosyltransferase 7 family. Mn(2+) serves as cofactor. In terms of tissue distribution, found in various tissues. Highest expression in placenta, prostate, testis, ovary, intestine and muscle, and in fetal brain.

The protein resides in the golgi apparatus. It localises to the golgi stack membrane. The catalysed reaction is an N-acetyl-beta-D-glucosaminyl derivative + UDP-alpha-D-galactose = a beta-D-galactosyl-(1-&gt;4)-N-acetyl-beta-D-glucosaminyl derivative + UDP + H(+). The enzyme catalyses N-acetyl-D-glucosamine + UDP-alpha-D-galactose = beta-D-galactosyl-(1-&gt;4)-N-acetyl-D-glucosamine + UDP + H(+). It carries out the reaction a beta-D-GlcNAc-(1-&gt;3)-beta-D-Gal-(1-&gt;4)-beta-D-Glc-(1&lt;-&gt;1)-Cer(d18:1(4E)) + UDP-alpha-D-galactose = a neolactoside nLc4Cer(d18:1(4E)) + UDP + H(+). It catalyses the reaction a beta-D-glucosylceramide + UDP-alpha-D-galactose = a beta-D-galactosyl-(1-&gt;4)-beta-D-glucosyl-(1&lt;-&gt;1)-ceramide + UDP + H(+). The catalysed reaction is a neolactoside IV(3)-beta-GlcNAc-nLc4Cer + UDP-alpha-D-galactose = a neolactoside nLc6Cer + UDP + H(+). Its pathway is protein modification; protein glycosylation. Functionally, responsible for the synthesis of complex-type N-linked oligosaccharides in many glycoproteins as well as the carbohydrate moieties of glycolipids. The sequence is that of Beta-1,4-galactosyltransferase 3 from Homo sapiens (Human).